Consider the following 148-residue polypeptide: MAPGLRGLPRRGLWLLLAHHLFMVTACRDPDYGTLIQELCLSRFKEDMETIGKTLWCDWGKTIGSYGELTHCTKLVANKIGCFWPNPEVDKFFIAVHHRYFSKCPVSGRALRDPPNSILCPFIVLPITVTLLMTALVVWRSKRTEGIV.

The N-terminal stretch at Met1–Ala26 is a signal peptide. Intrachain disulfides connect Cys27/Cys82, Cys40/Cys72, and Cys57/Cys104. Residues Cys27 to Ile118 are Extracellular-facing. Residues Leu119–Arg140 form a helical membrane-spanning segment. At Ser141–Val148 the chain is on the cytoplasmic side.

The protein belongs to the RAMP family. In terms of assembly, heterodimer of CALCRL and RAMP1; the interaction induces allosteric modulation of CALCRL function and CGRP1/CALCA and CGRP2/CALCB ligand specificity. Heterodimer of CALCR and RAMP1; interaction forms the AMYR1 receptor complex for amylin/IAPP and CGRP1/CALCA ligands.

It is found in the cell membrane. Functionally, accessory protein that interacts with and modulates the function of G-protein coupled receptors including calcitonin gene-related peptide type 1 receptor (CALCRL) and calcitonin receptor (CALCR). Required for the transport of CALCRL to the plasma membrane. Together with CALCRL, form the receptor complex for the calcitonin gene-related peptides CGRP1/CALCA and CGRP2/CALCB. Together with CALCR, form the AMYR1 receptor complex for amylin/IAPP and CGRP1/CALCA. This Rattus norvegicus (Rat) protein is Receptor activity-modifying protein 1.